The primary structure comprises 755 residues: Xaa-Pro dipeptidyl-peptidase (755 aa).

Catalysis depends on charge relay system residues S348, D468, and H498.

This sequence belongs to the peptidase S15 family. Homodimer.

It localises to the cytoplasm. It catalyses the reaction Hydrolyzes Xaa-Pro-|- bonds to release unblocked, N-terminal dipeptides from substrates including Ala-Pro-|-p-nitroanilide and (sequentially) Tyr-Pro-|-Phe-Pro-|-Gly-Pro-|-Ile.. In terms of biological role, removes N-terminal dipeptides sequentially from polypeptides having unsubstituted N-termini provided that the penultimate residue is proline. This chain is Xaa-Pro dipeptidyl-peptidase, found in Streptococcus thermophilus (strain CNRZ 1066).